The sequence spans 701 residues: DNA ligase 2 (701 aa).

The span at 1-10 (MSPAPQNRQP) shows a compositional bias: polar residues. The tract at residues 1 to 21 (MSPAPQNRQPSGVPVGGQFAA) is disordered. NAD(+) contacts are provided by residues 64–68 (DAEFD), 111–112 (SL), and Glu133. Lys135 serves as the catalytic N6-AMP-lysine intermediate. Arg156, Glu189, Lys302, and Lys326 together coordinate NAD(+). Positions 420, 423, 436, and 441 each coordinate Zn(2+). Residues 603 to 613 (KAAPAAGAKAP) show a composition bias toward low complexity. A disordered region spans residues 603–623 (KAAPAAGAKAPKLTKPDGKPM). One can recognise a BRCT domain in the interval 615–701 (LTKPDGKPMN…FAQMVEDGEV (87 aa)).

The protein belongs to the NAD-dependent DNA ligase family. LigA subfamily. Mg(2+) is required as a cofactor. Requires Mn(2+) as cofactor.

The enzyme catalyses NAD(+) + (deoxyribonucleotide)n-3'-hydroxyl + 5'-phospho-(deoxyribonucleotide)m = (deoxyribonucleotide)n+m + AMP + beta-nicotinamide D-nucleotide.. Functionally, DNA ligase that catalyzes the formation of phosphodiester linkages between 5'-phosphoryl and 3'-hydroxyl groups in double-stranded DNA using NAD as a coenzyme and as the energy source for the reaction. It is essential for DNA replication and repair of damaged DNA. The polypeptide is DNA ligase 2 (Pseudarthrobacter chlorophenolicus (strain ATCC 700700 / DSM 12829 / CIP 107037 / JCM 12360 / KCTC 9906 / NCIMB 13794 / A6) (Arthrobacter chlorophenolicus)).